The chain runs to 165 residues: Cyclic pyranopterin monophosphate synthase (165 aa).

Substrate-binding positions include 79–81 and 117–118; these read LCH and ME. D132 is a catalytic residue.

It belongs to the MoaC family. In terms of assembly, homohexamer; trimer of dimers.

The enzyme catalyses (8S)-3',8-cyclo-7,8-dihydroguanosine 5'-triphosphate = cyclic pyranopterin phosphate + diphosphate. It participates in cofactor biosynthesis; molybdopterin biosynthesis. Catalyzes the conversion of (8S)-3',8-cyclo-7,8-dihydroguanosine 5'-triphosphate to cyclic pyranopterin monophosphate (cPMP). The polypeptide is Cyclic pyranopterin monophosphate synthase (Chloroflexus aggregans (strain MD-66 / DSM 9485)).